Reading from the N-terminus, the 510-residue chain is Cytochrome P450 monooxygenase penQ (510 aa).

The helical transmembrane segment at 9 to 26 (WIVTLIVAATTYCTLRWV) threads the bilayer. N-linked (GlcNAc...) asparagine glycosylation is found at N148 and N341. C448 contacts heme. An N-linked (GlcNAc...) asparagine glycan is attached at N482.

The protein belongs to the cytochrome P450 family. Heme is required as a cofactor.

It localises to the membrane. It functions in the pathway secondary metabolite biosynthesis. Functionally, cytochrome P450 monooxygenase; part of the gene cluster that mediates the biosynthesis of the indole diterpenes penitrems. The geranylgeranyl diphosphate (GGPP) synthase penG catalyzes the first step in penitrem biosynthesis via conversion of farnesyl pyrophosphate and isopentyl pyrophosphate into geranylgeranyl pyrophosphate (GGPP). Condensation of indole-3-glycerol phosphate with GGPP by the prenyl transferase penC then forms 3-geranylgeranylindole (3-GGI). Epoxidation by the FAD-dependent monooxygenase penM leads to a epoxidized-GGI that is substrate of the terpene cyclase penB for cyclization to yield paspaline. Paspaline is subsequently converted to 13-desoxypaxilline by the cytochrome P450 monooxygenase penP, the latter being then converted to paxilline by the cytochrome P450 monooxygenase penQ. Paxilline is converted to beta-paxitriol via C-10 ketoreduction by the short-chain dehydrogenase PC-15 which can be monoprenylated at the C-20 by the indole diterpene prenyltransferase penD. A two-step elimination (acetylation and elimination) process performed by the O-acetyltransferase PC-16 and the P.simplicissimum ptmI-ortholog not yet identified in P.crustosum, leads to the production of the prenylated form of penijanthine. The FAD-linked oxidoreductase ptmO then converts the prenylated form of penijanthine into PC-M5 which is in turn transformed into PC-M4 by the aromatic dimethylallyltransferase PC-22. A series of oxidation steps involving 4 cytochrome P450 monooxygenases (PC-21, PC-05, PC-23, PC-20) and a FAD-dependent monooxygenase (PC-14) are required for the transformation of PC-M4 to penitrems A and E. Synthesis of these final products is proposed to proceed via penitrems D and C (PC-21, PC-05, PC-14) and penitrems B and F (PC-21, PC-05, PC-14, PC-23). This chain is Cytochrome P450 monooxygenase penQ, found in Penicillium crustosum (Blue mold fungus).